A 506-amino-acid polypeptide reads, in one-letter code: Adenylosuccinate synthetase (506 aa).

GTP-binding positions include 35-41 (GDEGKGK) and 63-65 (GHT). Asp36 serves as the catalytic Proton acceptor. Mg(2+)-binding residues include Asp36 and Gly63. Residues 36-39 (DEGK), 61-64 (NAGH), Thr212, Arg226, Asn304, Thr319, and Arg383 each bind IMP. His64 acts as the Proton donor in catalysis. 379–385 (VTTKRKR) serves as a coordination point for substrate. Residues Arg385, 411–413 (KLD), and 494–496 (GVG) contribute to the GTP site.

It belongs to the adenylosuccinate synthetase family. In terms of assembly, homodimer. Mg(2+) is required as a cofactor.

It localises to the cytoplasm. The enzyme catalyses IMP + L-aspartate + GTP = N(6)-(1,2-dicarboxyethyl)-AMP + GDP + phosphate + 2 H(+). The protein operates within purine metabolism; AMP biosynthesis via de novo pathway; AMP from IMP: step 1/2. Its function is as follows. Plays an important role in the de novo pathway and in the salvage pathway of purine nucleotide biosynthesis. Catalyzes the first committed step in the biosynthesis of AMP from IMP. This chain is Adenylosuccinate synthetase, found in Drosophila yakuba (Fruit fly).